We begin with the raw amino-acid sequence, 476 residues long: Thymidine phosphorylase (476 aa).

Positions 1-11 (MAAPGTPPPLA) are enriched in pro residues. Positions 1 to 26 (MAAPGTPPPLAPETAGADSGGGSGEH) are disordered. 2 positions are modified to phosphothreonine: T6 and T475.

It belongs to the thymidine/pyrimidine-nucleoside phosphorylase family. As to quaternary structure, homodimer.

The enzyme catalyses thymidine + phosphate = 2-deoxy-alpha-D-ribose 1-phosphate + thymine. The protein operates within pyrimidine metabolism; dTMP biosynthesis via salvage pathway; dTMP from thymine: step 1/2. Catalyzes the reversible phosphorolysis of thymidine. The produced molecules are then utilized as carbon and energy sources or in the rescue of pyrimidine bases for nucleotide synthesis. The protein is Thymidine phosphorylase (Tymp) of Rattus norvegicus (Rat).